Here is a 295-residue protein sequence, read N- to C-terminus: Shikimate dehydrogenase (NADP(+)) (295 aa).

Shikimate-binding positions include 24–26 and Thr71; that span reads SRS. Lys75 (proton acceptor) is an active-site residue. Glu87 lines the NADP(+) pocket. Shikimate is bound by residues Asn96 and Asp111. NADP(+)-binding positions include 136–140, 160–165, and Met233; these read GAGGA and NRTASR. Shikimate is bound at residue Tyr235. Gly256 is a binding site for NADP(+).

It belongs to the shikimate dehydrogenase family. In terms of assembly, homodimer.

The catalysed reaction is shikimate + NADP(+) = 3-dehydroshikimate + NADPH + H(+). The protein operates within metabolic intermediate biosynthesis; chorismate biosynthesis; chorismate from D-erythrose 4-phosphate and phosphoenolpyruvate: step 4/7. Involved in the biosynthesis of the chorismate, which leads to the biosynthesis of aromatic amino acids. Catalyzes the reversible NADPH linked reduction of 3-dehydroshikimate (DHSA) to yield shikimate (SA). This Cupriavidus necator (strain ATCC 17699 / DSM 428 / KCTC 22496 / NCIMB 10442 / H16 / Stanier 337) (Ralstonia eutropha) protein is Shikimate dehydrogenase (NADP(+)).